The following is a 142-amino-acid chain: Hemoglobin subunit alpha-2 (142 aa).

The Globin domain maps to 2–142; sequence VLSAADKSNI…VSTVLTSKYR (141 aa). Residue His59 coordinates O2. His88 is a binding site for heme b.

This sequence belongs to the globin family. As to quaternary structure, heterotetramer of two alpha chains and two beta chains. As to expression, red blood cells.

Its function is as follows. Involved in oxygen transport from the lung to the various peripheral tissues. In Bubalus bubalis (Domestic water buffalo), this protein is Hemoglobin subunit alpha-2.